The following is a 250-amino-acid chain: Transmembrane ascorbate-dependent reductase CYB561 (250 aa).

At M1 the chain carries N-acetylmethionine. Topologically, residues 1 to 15 (MEHSSASVPAALPYY) are cytoplasmic. A helical membrane pass occupies residues 16–36 (VAFSQLLGLTVVAVTGAWLGL). The 202-residue stretch at 18-219 (FSQLLGLTVV…FGVVVLYILA (202 aa)) folds into the Cytochrome b561 domain. Residues 37 to 50 (YRGGIAWESSLQFN) lie on the Vesicular side of the membrane. The chain crosses the membrane as a helical span at residues 51–71 (VHPLCMVIGMIFLQGDALLVY). Heme b contacts are provided by H52, R72, and K79. Topologically, residues 72-83 (RVFRREAKRTTK) are cytoplasmic. K79 and K83 together coordinate L-ascorbate. A helical membrane pass occupies residues 84 to 104 (ILHGLLHVFAFIIALVGLVAV). Residues H86, 115 to 118 (DLYS), and H120 contribute to the heme b site. Topologically, residues 105-123 (FDYHKKKGYADLYSLHSWC) are vesicular. Residues 124-144 (GILVFVLYFVQWLVGFSFFLF) form a helical membrane-spanning segment. Over 145–157 (PGASFSLRSRYRP) the chain is Cytoplasmic. R152 is a binding site for L-ascorbate. Residues 158–178 (QHIFFGATIFLFSVGTALLGL) traverse the membrane as a helical segment. Heme b is bound by residues H159 and E180. At 179–197 (KEALLFKLGSKYSTFEPEG) the chain is on the vesicular side. A helical membrane pass occupies residues 198 to 218 (VLANVLGLLLVCFGVVVLYIL). Topologically, residues 219–250 (AQADWKRPSQAEEQALSMDFKTLTEGDSPSPQ) are cytoplasmic. Residue K224 participates in heme b binding. A phosphoserine mark is found at S246 and S248.

Requires heme b as cofactor. Abundantly distributed in a number of neuroendocrine tissues.

It localises to the cytoplasmic vesicle. Its subcellular location is the secretory vesicle. The protein resides in the chromaffin granule membrane. It carries out the reaction monodehydro-L-ascorbate radical(out) + L-ascorbate(in) = monodehydro-L-ascorbate radical(in) + L-ascorbate(out). Transmembrane reductase that uses ascorbate as an electron donor in the cytoplasm and transfers electrons across membranes to reduce monodehydro-L-ascorbate radical in the lumen of secretory vesicles. It is therefore involved the regeneration and homeostasis within secretory vesicles of ascorbate which in turn provides reducing equivalents needed to support the activity of intravesicular enzymes. This Mus musculus (Mouse) protein is Transmembrane ascorbate-dependent reductase CYB561.